A 192-amino-acid chain; its full sequence is Protein GrpE (192 aa).

The protein belongs to the GrpE family. In terms of assembly, homodimer.

The protein localises to the cytoplasm. Functionally, participates actively in the response to hyperosmotic and heat shock by preventing the aggregation of stress-denatured proteins, in association with DnaK and GrpE. It is the nucleotide exchange factor for DnaK and may function as a thermosensor. Unfolded proteins bind initially to DnaJ; upon interaction with the DnaJ-bound protein, DnaK hydrolyzes its bound ATP, resulting in the formation of a stable complex. GrpE releases ADP from DnaK; ATP binding to DnaK triggers the release of the substrate protein, thus completing the reaction cycle. Several rounds of ATP-dependent interactions between DnaJ, DnaK and GrpE are required for fully efficient folding. The protein is Protein GrpE of Neisseria gonorrhoeae (strain NCCP11945).